The sequence spans 249 residues: Cytoplasmic envelopment protein 1 (249 aa).

This sequence belongs to the herpesviridae cytoplasmic envelopment protein 1 family.

It localises to the virion. The protein localises to the virion tegument. Its subcellular location is the host cytoplasm. The protein resides in the host Golgi apparatus. Plays a critical role in cytoplasmic virus egress. Participates in the final step of tegumentation and envelope acquisition within the host cytoplasm. In Homo sapiens (Human), this protein is Cytoplasmic envelopment protein 1 (UL103).